Here is a 262-residue protein sequence, read N- to C-terminus: Nodulation protein J (262 aa).

Positions Ala-33 to Arg-259 constitute an ABC transmembrane type-2 domain. The next 6 membrane-spanning stretches (helical) occupy residues Ile-35 to Ala-55, Gly-62 to Ala-82, Ala-125 to Pro-145, Val-147 to Ile-167, Tyr-177 to Phe-197, and Leu-236 to Leu-256.

The protein belongs to the ABC-2 integral membrane protein family. Lipooligosaccharide exporter (TC 3.A.1.102) subfamily. The complex is composed of two ATP-binding proteins (NodI) and two transmembrane proteins (NodJ).

It localises to the cell inner membrane. In terms of biological role, part of the ABC transporter complex NodIJ involved in the export of the nodulation factors (Nod factors), the bacterial signal molecules that induce symbiosis and subsequent nodulation induction. Nod factors are LCO (lipo-chitin oligosaccharide), a modified beta-1,4-linked N-acetylglucosamine oligosaccharide. This subunit encodes the transporter. The protein is Nodulation protein J (nodJ) of Sinorhizobium fredii (strain NBRC 101917 / NGR234).